The following is a 195-amino-acid chain: uncharacterized protein (195 aa).

An N-terminal signal peptide occupies residues 1–20 (MLKFRLILTVLTVLLITVNG). Positions 26–195 (IENKSSTSSS…LHNQYPPQQN (170 aa)) are disordered. Residue asparagine 28 is glycosylated (N-linked (GlcNAc...) asparagine). 2 stretches are compositionally biased toward low complexity: residues 29–43 (KSST…SKPS) and 74–104 (QSKT…GGNQ). Polar residues-rich tracts occupy residues 112–123 (DPYQTGSYQGPY) and 151–176 (PKNT…NNGP).

As to expression, component of the acid-soluble organic matrix of calcified layers of the shell (at protein level).

The protein resides in the secreted. This is an uncharacterized protein from Lottia gigantea (Giant owl limpet).